The primary structure comprises 526 residues: GMP synthase [glutamine-hydrolyzing] (526 aa).

Residues 13-204 (TVLVVDFGAQ…LYRGAGLSPD (192 aa)) enclose the Glutamine amidotransferase type-1 domain. Cys90 (nucleophile) is an active-site residue. Catalysis depends on residues His178 and Glu180. Positions 205–400 (WTTGNVIEEQ…LGLPDEIVQR (196 aa)) constitute a GMPS ATP-PPase domain. 232–238 (SGGVDSA) contributes to the ATP binding site.

As to quaternary structure, homodimer.

The catalysed reaction is XMP + L-glutamine + ATP + H2O = GMP + L-glutamate + AMP + diphosphate + 2 H(+). Its pathway is purine metabolism; GMP biosynthesis; GMP from XMP (L-Gln route): step 1/1. In terms of biological role, catalyzes the synthesis of GMP from XMP. The protein is GMP synthase [glutamine-hydrolyzing] (guaA) of Streptomyces coelicolor (strain ATCC BAA-471 / A3(2) / M145).